Reading from the N-terminus, the 434-residue chain is Fez family zinc finger protein 2 (434 aa).

The Engrailed homology 1 repressor signature appears at 27–42; that stretch reads SLAFSIERIMAKTSEP. 6 consecutive C2H2-type zinc fingers follow at residues 253 to 275, 281 to 303, 309 to 331, 337 to 359, 365 to 387, and 393 to 416; these read FTCE…MPVH, FVCK…KIIH, HKCN…IRIH, FVCE…KLTH, YKCS…MHTH, and FTCA…RKLH.

Belongs to the krueppel C2H2-type zinc-finger protein family.

It is found in the nucleus. In terms of biological role, transcription repressor. Component of the regulatory cascade that controls the development of dopaminergic (DA) and serotonergic (5HT) neurons. This chain is Fez family zinc finger protein 2 (fezf2), found in Xenopus laevis (African clawed frog).